Consider the following 662-residue polypeptide: Acetyl-coenzyme A synthetase (662 aa).

CoA contacts are provided by residues 197 to 200 (RKGK) and Thr317. Residues 393-395 (GEP), 417-422 (DTWWQT), Asp510, and Arg525 each bind ATP. Ser533 is a binding site for CoA. Arg536 is an ATP binding site. 2 residues coordinate Mg(2+): His549 and Val552. Lys623 carries the post-translational modification N6-acetyllysine.

Belongs to the ATP-dependent AMP-binding enzyme family. It depends on Mg(2+) as a cofactor. In terms of processing, acetylated. Deacetylation by the SIR2-homolog deacetylase activates the enzyme.

It carries out the reaction acetate + ATP + CoA = acetyl-CoA + AMP + diphosphate. Functionally, catalyzes the conversion of acetate into acetyl-CoA (AcCoA), an essential intermediate at the junction of anabolic and catabolic pathways. AcsA undergoes a two-step reaction. In the first half reaction, AcsA combines acetate with ATP to form acetyl-adenylate (AcAMP) intermediate. In the second half reaction, it can then transfer the acetyl group from AcAMP to the sulfhydryl group of CoA, forming the product AcCoA. The sequence is that of Acetyl-coenzyme A synthetase from Helicobacter pylori (strain HPAG1).